Reading from the N-terminus, the 534-residue chain is CTP synthase (534 aa).

Residues 1–267 (MSKYIVVTGG…GSYILNRLNI (267 aa)) form an amidoligase domain region. Ser-13 is a binding site for CTP. Ser-13 lines the UTP pocket. 14–19 (SIGKGI) is an ATP binding site. L-glutamine is bound at residue Tyr-54. An ATP-binding site is contributed by Asp-71. Mg(2+) contacts are provided by Asp-71 and Glu-141. Residues 148-150 (DIE), 188-193 (KTKPTQ), and Lys-224 each bind CTP. UTP is bound by residues 188-193 (KTKPTQ) and Lys-224. The region spanning 294–532 (KIAVVGKYIE…IKAAKNKKQN (239 aa)) is the Glutamine amidotransferase type-1 domain. Gly-353 is an L-glutamine binding site. The Nucleophile; for glutamine hydrolysis role is filled by Cys-380. Residues 381–384 (LGLH), Glu-403, and Arg-460 each bind L-glutamine. Active-site residues include His-505 and Glu-507.

This sequence belongs to the CTP synthase family. Homotetramer.

The catalysed reaction is UTP + L-glutamine + ATP + H2O = CTP + L-glutamate + ADP + phosphate + 2 H(+). The enzyme catalyses L-glutamine + H2O = L-glutamate + NH4(+). It carries out the reaction UTP + NH4(+) + ATP = CTP + ADP + phosphate + 2 H(+). Its pathway is pyrimidine metabolism; CTP biosynthesis via de novo pathway; CTP from UDP: step 2/2. With respect to regulation, allosterically activated by GTP, when glutamine is the substrate; GTP has no effect on the reaction when ammonia is the substrate. The allosteric effector GTP functions by stabilizing the protein conformation that binds the tetrahedral intermediate(s) formed during glutamine hydrolysis. Inhibited by the product CTP, via allosteric rather than competitive inhibition. Its function is as follows. Catalyzes the ATP-dependent amination of UTP to CTP with either L-glutamine or ammonia as the source of nitrogen. Regulates intracellular CTP levels through interactions with the four ribonucleotide triphosphates. The protein is CTP synthase of Methanosphaera stadtmanae (strain ATCC 43021 / DSM 3091 / JCM 11832 / MCB-3).